Here is a 230-residue protein sequence, read N- to C-terminus: Methyltransferase aurB (230 aa).

This sequence belongs to the methyltransferase superfamily.

It participates in polyketide biosynthesis. In terms of biological role, methyltransferase; part of the gene cluster that mediates the biosynthesis of aurovertins, fungal polyketides that exhibit potent inhibition of adenosine triphosphate synthase. Tha biosynthesis starts with the HR-PKS aurA that selects propionate as the starter unit; synthesizes a hexa-ene chain through the repeated functions of the KR and DH domains in the first six iterations; selectively introduces three alpha-methyl substitutions at C4, C6, and C16 using the S-adensylmethionine-dependent cMET; and shuts off KR and DH in the last three iterations to afford a 1,3,5-triketo portion that can undergo intramolecular cyclization to yield the alpha-pyrone intermediate. AurE may act as a cyclase and enhances the rate of pyrone formation and product release of aurA. The methyltransferase aurB then methylates the C17 hydroxyl group. C17 methylation is required to initiate epoxidation by the downstream monooxygenase aurC. The monooxygenase aurC and the epoxide hydrolase aurD can iteratively transform the terminal triene portion of the methylated precursor into the dioxabicyclo[3.2.1]octane scaffold of aurovertin E. Epoxidation modifications of the precursor occur in two separate steps; bis-epoxidation of the two terminal olefins takes place first, followed by another epoxidation that occurs at C7-C8 after tetrahydrofuran formation. The O-acyltransferase aurG converts aurovertin E to aurovertin A. This is Methyltransferase aurB from Calcarisporium arbuscula (Dendryphion arbuscula).